Reading from the N-terminus, the 234-residue chain is MSTKSKAYKAAAELVDRSRLYRPIEAAKLAKETSSKNFDATVDVVFRLGVDPRKADQLVRGTVSLPHGTGKDVRVAVFAEGDNAEAAKAAGADIVGTEELIAAINEGNIDFDVAIATPDQMAKVGRVARVLGPRGLMPNPKTGTVTADVTKAVADVKGGKISFRVDKASNLHAIIGKASFDAEKLAENYGALYDEIIRLKPSSAKGIYAKKITISTTSGPGIPVDASVEKNYTD.

Belongs to the universal ribosomal protein uL1 family. In terms of assembly, part of the 50S ribosomal subunit.

Binds directly to 23S rRNA. The L1 stalk is quite mobile in the ribosome, and is involved in E site tRNA release. Functionally, protein L1 is also a translational repressor protein, it controls the translation of the L11 operon by binding to its mRNA. The protein is Large ribosomal subunit protein uL1 of Corynebacterium aurimucosum (strain ATCC 700975 / DSM 44827 / CIP 107346 / CN-1) (Corynebacterium nigricans).